The chain runs to 71 residues: Conotoxin Bu25 (71 aa).

Positions 1–21 are cleaved as a signal peptide; that stretch reads MGMRMMVTVFPLVVLATTVVS. The propeptide occupies 22–44; the sequence is LRSNRASDGRRGIVNKLNDLVPK. Arg-70 is modified (arginine amide).

The protein belongs to the conotoxin A superfamily. Contains 3 disulfide bonds. They are not indicated here, since framework IV presents two different connectivities (I-V, II-III, IV-VI and I-III, II-V, IV-VI). As to expression, expressed by the venom duct.

It localises to the secreted. The chain is Conotoxin Bu25 from Conus bullatus (Bubble cone).